Reading from the N-terminus, the 700-residue chain is AP-2 complex subunit beta (700 aa).

A disordered region spans residues 625 to 700; that stretch reads VGNSFPPTGA…RKLSMKRPFS (76 aa). Ser649 carries the phosphoserine modification. A Phosphothreonine modification is found at Thr652. Over residues 653-663 the composition is skewed to basic and acidic residues; the sequence is AMMDDYDKPAE. Ser683 is subject to Phosphoserine.

It belongs to the adaptor complexes large subunit family. In terms of assembly, adaptor protein complex 2 (AP-2) is a heterotetramer composed of two large adaptins (alpha-type subunit APL3 and beta-type subunit APL1), a medium chain (mu-type subunit APM4) and a small adaptin (sigma-type subunit APS2). Interacts with APS2.

Its subcellular location is the cell membrane. It localises to the membrane. The protein localises to the coated pit. Adaptins are components of the adaptor complexes which link clathrin to receptors in coated vesicles. Clathrin-associated protein complexes are believed to interact with the cytoplasmic tails of membrane proteins, leading to their selection and concentration. Beta adaptin is a subunit of the plasma membrane adaptor. The polypeptide is AP-2 complex subunit beta (APL1) (Saccharomyces cerevisiae (strain ATCC 204508 / S288c) (Baker's yeast)).